The sequence spans 1311 residues: Zinc finger protein 521 (1311 aa).

Over residues 1–10 (MSRRKQAKPR) the composition is skewed to basic residues. The segment at 1-37 (MSRRKQAKPRSLKDPNCKLEDKTEDGEALDCKKRPED) is disordered. Positions 11-21 (SLKDPNCKLED) are enriched in basic and acidic residues. The segment at 47–67 (HSCDSCLQVFESLSDITEHKI) adopts a C2H2-type 1; degenerate zinc-finger fold. The disordered stretch occupies residues 81–108 (DPTCSWPASSPSSKDQTSPSHGEGCDFG). Positions 87-102 (PASSPSSKDQTSPSHG) are enriched in low complexity. C2H2-type zinc fingers lie at residues 118–140 (YPCQ…EQSH), 146–168 (FKCT…IKLH), 174–196 (YHCS…LKTH), 202–224 (YKCA…MQVH), 246–269 (QKCS…AECH), 281–304 (LQCV…EQVH), and 310–332 (NSCS…MDSH). The span at 349-358 (VGYTSVSSTT) shows a compositional bias: low complexity. The segment at 349 to 397 (VGYTSVSSTTPDSNLSVDSSTMVEAAPPIPKSRGRKRAAQQTPDMTGPS) is disordered. Composition is skewed to polar residues over residues 359–370 (PDSNLSVDSSTM) and 387–397 (AQQTPDMTGPS). The C2H2-type 9; degenerate zinc finger occupies 405-429 (YSCIYCNKQLFSSLAVLQIHLKTMH). 3 consecutive C2H2-type zinc fingers follow at residues 437 to 460 (HICQ…KQVH), 477 to 500 (YQCN…RCSH), and 513 to 536 (FFCP…RQVH). S546 is modified (phosphoserine). The C2H2-type 13; atypical zinc finger occupies 560-585 (YSCSYCTNSPIFNSVLKLNKHIKENH). S605 and S608 each carry phosphoserine. 7 consecutive C2H2-type zinc fingers follow at residues 634–656 (YICN…LKTH), 664–686 (LTCP…VTIH), 694–717 (YICE…LDMH), 722–745 (FRCT…AVKH), 752–775 (YRCT…KHNH), 783–805 (HKCI…ITTH), and 809–832 (YNCK…REKH). Residues 863-882 (TNSQESHNSHDGSEEDVDTS) are disordered. The segment at 886–908 (YGCDICGAAYTMETLLQNHQLRD) adopts a C2H2-type 21; degenerate zinc-finger fold. 3 C2H2-type zinc fingers span residues 930–952 (YKCN…MQTH), 959–981 (YMCP…KVTH), and 1020–1042 (FRCV…GTFH). The segment at 1065-1083 (YKCASCLKEFRSKQDLVKL) adopts a C2H2-type 25; degenerate zinc-finger fold. Residues 1138-1161 (TRCSSCNVKFESESELQNHIQTIH) form a C2H2-type 26 zinc finger. K1146 is covalently cross-linked (Glycyl lysine isopeptide (Lys-Gly) (interchain with G-Cter in SUMO2)). The span at 1168–1178 (SNSTQLKTPQV) shows a compositional bias: polar residues. Residues 1168–1188 (SNSTQLKTPQVSPMPRISPSQ) form a disordered region. 4 consecutive C2H2-type zinc fingers follow at residues 1195–1217 (YQCI…VANH), 1225–1247 (HECK…LIEH), 1256–1279 (FKCP…FSAH), and 1286–1309 (YDCT…MTQH).

The protein belongs to the krueppel C2H2-type zinc-finger protein family. In terms of assembly, interacts with EBF1. Interacts with SMAD1 and SMAD4. As to expression, predominantly expressed in hematopoietic cells. Present in organs and tissues that contain stem and progenitor cells, myeloid and/or lymphoid: placenta, spleen, lymph nodes, thymus, bone marrow and fetal liver. Within the hematopoietic system, it is abundant in CD34(+) cells but undetectable in mature peripheral blood leukocytes, and its levels rapidly decrease during the differentiation of CD34(+) cells in response to hemopoietins.

It is found in the nucleus. Its function is as follows. Transcription factor that can both act as an activator or a repressor depending on the context. Involved in BMP signaling and in the regulation of the immature compartment of the hematopoietic system. Associates with SMADs in response to BMP2 leading to activate transcription of BMP target genes. Acts as a transcriptional repressor via its interaction with EBF1, a transcription factor involved specification of B-cell lineage; this interaction preventing EBF1 to bind DNA and activate target genes. The protein is Zinc finger protein 521 (ZNF521) of Homo sapiens (Human).